Consider the following 1522-residue polypeptide: Rho guanine nucleotide exchange factor 11 (1522 aa).

The segment at 1–40 is disordered; it reads MSVRLPQSIDRLSSLSSLGDSAPERKSPSHHRQPSDASET. Phosphoserine is present on residues S2, S14, S16, and S35. A PDZ domain is found at 47 to 126; it reads CVIIQKDQHG…LTLLGSSPSS (80 aa). Disordered stretches follow at residues 128–175 and 200–231; these read GISG…PEVQ and YGDTSQRPSEGRLSLDSQEGDSGLDSGTERFP. Residues 149-161 show a composition bias toward pro residues; sequence PSPPPPPPLPPPQ. A phosphoserine mark is found at S245 and S251. The residue at position 254 (T254) is a Phosphothreonine. Residues S255 and S271 each carry the phosphoserine modification. Positions 263-286 are disordered; sequence AQHHRRQGSDAAVPSTGDQGVDQS. Residues 306-486 enclose the RGSL domain; the sequence is ESDIIFQDLE…NTYMSHAGIR (181 aa). The stretch at 444–470 forms a coiled coil; sequence LRERQVAEKQLAALGDILSKYEEDRSA. Positions 490–555 are disordered; sequence ARPSNTAEKA…SSQSTFHIPL (66 aa). Basic and acidic residues predominate over residues 521 to 533; the sequence is SKKEKDALEDKKR. S556, S635, and S663 each carry phosphoserine. Residues 573–680 form a disordered region; that stretch reads ENNQQYDAPE…FTPKMGRRSI (108 aa). A compositionally biased stretch (basic and acidic residues) spans 601–637; that stretch reads DSSRSEIRLGRSESLKGREEMKRSRKAENVPRSRSDV. Residues 651-664 are compositionally biased toward low complexity; sequence SASSSTSSLSTRSL. Phosphothreonine occurs at positions 668 and 672. Positions 734–923 constitute a DH domain; it reads DRQEVINELF…REILKYVNEA (190 aa). One can recognise a PH domain in the interval 965–1079; it reads KMIHEGPLTW…WMELLEEAVR (115 aa). Residues 1084–1141 form a disordered region; the sequence is HPGAAPMPVHPPPPGPREPAQQGPTPSRVELDDSDVFHGEPEPEELPGGTGSQQRVQG. Residues 1091-1100 are compositionally biased toward pro residues; that stretch reads PVHPPPPGPR. Residues 1112–1124 are compositionally biased toward basic and acidic residues; that stretch reads VELDDSDVFHGEP. Position 1155 is a phosphoserine (S1155). Disordered stretches follow at residues 1223-1320, 1332-1423, and 1453-1522; these read ETQA…AGGY, KVVP…RDVG, and LGGE…SPGP. The segment covering 1236–1245 has biased composition (polar residues); that stretch reads PTPSVISVTS. Residues S1295 and S1300 each carry the phosphoserine modification. Residues 1338–1353 are compositionally biased toward low complexity; that stretch reads PESGQSEPGPPEVEGG. Phosphoserine is present on residues S1457 and S1458. Residues T1462 and T1475 each carry the phosphothreonine modification. S1480 bears the Phosphoserine mark. Over residues 1503–1513 the composition is skewed to acidic residues; the sequence is DGSDAPLEDST.

In terms of assembly, interacts with GNA12 and GNA13 through the RGS domain. Interacts with RHOA, PLXNB1 and PLXNB2. Interacts with SLC1A6. Interacts (via DH domain) with GCSAM (via C-terminus). Found in a complex with ARHGEF11 and ARHGEF12; binding to ARHGEF11 and ARHGEF12 enhances CDC42 GEF activity of PLEKHG4B, and PLEKHG4B, in turn, inhibits ARHGEF11- and ARHGEF12-mediated RHOA activation. Phosphorylated by MAP kinase p38 (MAPK11, MAPK12, MAPK13 and/or MAPK14). In terms of processing, ubiquitinated by the BCR(KLHL20) E3 ubiquitin ligase complex when previously phosphorylated by MAP kinase p38 (MAPK11, MAPK12, MAPK13 and/or MAPK14), leading to its degradation, thereby restricting RhoA activity and facilitating growth cone spreading and neurite outgrowth. Ubiquitously expressed.

Its subcellular location is the cytoplasm. It localises to the membrane. May play a role in the regulation of RhoA GTPase by guanine nucleotide-binding alpha-12 (GNA12) and alpha-13 (GNA13). Acts as guanine nucleotide exchange factor (GEF) for RhoA GTPase and may act as GTPase-activating protein (GAP) for GNA12 and GNA13. Involved in neurotrophin-induced neurite outgrowth. The sequence is that of Rho guanine nucleotide exchange factor 11 (ARHGEF11) from Homo sapiens (Human).